The following is a 668-amino-acid chain: UvrABC system protein B (668 aa).

Residues 27-413 (AGVQAGHRFQ…STQVVEQIIR (387 aa)) enclose the Helicase ATP-binding domain. 40-47 (GATGTGKT) is a binding site for ATP. Positions 93 to 116 (YYDYYQPEAYIPVTDTYIEKSASI) match the Beta-hairpin motif. The Helicase C-terminal domain occupies 430-596 (QVDDLYGEIR…PIVKKTSNAI (167 aa)). One can recognise a UVR domain in the interval 628-663 (PPLIQDLEAKMKAAAQELAFEEAARYRDQIKRLRDR).

This sequence belongs to the UvrB family. Forms a heterotetramer with UvrA during the search for lesions. Interacts with UvrC in an incision complex.

It is found in the cytoplasm. Functionally, the UvrABC repair system catalyzes the recognition and processing of DNA lesions. A damage recognition complex composed of 2 UvrA and 2 UvrB subunits scans DNA for abnormalities. Upon binding of the UvrA(2)B(2) complex to a putative damaged site, the DNA wraps around one UvrB monomer. DNA wrap is dependent on ATP binding by UvrB and probably causes local melting of the DNA helix, facilitating insertion of UvrB beta-hairpin between the DNA strands. Then UvrB probes one DNA strand for the presence of a lesion. If a lesion is found the UvrA subunits dissociate and the UvrB-DNA preincision complex is formed. This complex is subsequently bound by UvrC and the second UvrB is released. If no lesion is found, the DNA wraps around the other UvrB subunit that will check the other stand for damage. This chain is UvrABC system protein B, found in Thermosynechococcus vestitus (strain NIES-2133 / IAM M-273 / BP-1).